A 240-amino-acid polypeptide reads, in one-letter code: 2,3,4,5-tetrahydropyridine-2,6-dicarboxylate N-acetyltransferase (240 aa).

The protein belongs to the transferase hexapeptide repeat family. DapH subfamily.

It catalyses the reaction (S)-2,3,4,5-tetrahydrodipicolinate + acetyl-CoA + H2O = L-2-acetamido-6-oxoheptanedioate + CoA. Its pathway is amino-acid biosynthesis; L-lysine biosynthesis via DAP pathway; LL-2,6-diaminopimelate from (S)-tetrahydrodipicolinate (acetylase route): step 1/3. Its function is as follows. Catalyzes the transfer of an acetyl group from acetyl-CoA to tetrahydrodipicolinate. This Bacillus cytotoxicus (strain DSM 22905 / CIP 110041 / 391-98 / NVH 391-98) protein is 2,3,4,5-tetrahydropyridine-2,6-dicarboxylate N-acetyltransferase.